Here is a 197-residue protein sequence, read N- to C-terminus: Prefoldin subunit 3 (197 aa).

Alanine 2 is modified (N-acetylalanine). Lysine 59 bears the N6-acetyllysine mark.

Belongs to the prefoldin subunit alpha family. As to quaternary structure, heterohexamer of two PFD-alpha type and four PFD-beta type subunits. Binds to the C-terminal part of VHL. As to expression, ubiquitous.

The protein resides in the cytoplasm. Its subcellular location is the nucleus. In terms of biological role, binds specifically to cytosolic chaperonin (c-CPN) and transfers target proteins to it. Binds to nascent polypeptide chain and promotes folding in an environment in which there are many competing pathways for nonnative proteins. In Homo sapiens (Human), this protein is Prefoldin subunit 3 (VBP1).